The sequence spans 577 residues: Type I restriction enzyme MjaVII methylase subunit (577 aa).

S-adenosyl-L-methionine-binding positions include 251 to 256, 281 to 283, glutamate 306, and 335 to 336; these read EVYTPV, SGT, and DS.

It belongs to the N4/N6-methyltransferase family. In terms of assembly, the type I restriction/modification system is composed of three polypeptides R, M and S.

It catalyses the reaction a 2'-deoxyadenosine in DNA + S-adenosyl-L-methionine = an N(6)-methyl-2'-deoxyadenosine in DNA + S-adenosyl-L-homocysteine + H(+). The subtype gamma methyltransferase (M) subunit of a type I restriction enzyme. The M and S subunits together form a methyltransferase (MTase) that methylates A-3 on the top and bottom strands of the sequence 5'-CAAN(7)TGG-3'. In the presence of the R subunit the complex can also act as an endonuclease, binding to the same target sequence but cutting the DNA some distance from this site. Whether the DNA is cut or modified depends on the methylation state of the target sequence. When the target site is unmodified, the DNA is cut. When the target site is hemimethylated, the complex acts as a maintenance MTase modifying the DNA so that both strands become methylated. After locating a non-methylated recognition site, the enzyme complex serves as a molecular motor that translocates DNA in an ATP-dependent manner until a collision occurs that triggers cleavage. The protein is Type I restriction enzyme MjaVII methylase subunit of Methanocaldococcus jannaschii (strain ATCC 43067 / DSM 2661 / JAL-1 / JCM 10045 / NBRC 100440) (Methanococcus jannaschii).